The following is a 185-amino-acid chain: Large ribosomal subunit protein bL25 (185 aa).

It belongs to the bacterial ribosomal protein bL25 family. CTC subfamily. In terms of assembly, part of the 50S ribosomal subunit; part of the 5S rRNA/L5/L18/L25 subcomplex. Contacts the 5S rRNA. Binds to the 5S rRNA independently of L5 and L18.

In terms of biological role, this is one of the proteins that binds to the 5S RNA in the ribosome where it forms part of the central protuberance. The chain is Large ribosomal subunit protein bL25 from Chlamydia muridarum (strain MoPn / Nigg).